The chain runs to 345 residues: MSTPTQLSYKDAGVDIDAGNALVDNIKTAVKRTHRPEVMGNLGGFGALCELPTKYKHPVLVSGTDGVGTKLRLAIDYKKHDTVGIDLVAMCSNDLIVSGAEPLFFLDYYATGKLDVDAATAVVKGIAEGCVQSGCALIGGETAEMPGMYEGDDYDLAGFCVGVVEKEEIIDGTKVVAGDSLIALGASGPHSNGFSLIRKVLEVSGANPEQELEGKALIDHLLEPTKIYVKSLLKLLEQTEVHAMAHITGGGFWENIPRVLPDDCKAVIQGDSWQWPSIFNWLMENGNIAEFEMYRTFNCGVGMVVALPSDKVEAALTLLNAEGEKAWLIGEIAKRDDSEEQVEIL.

It belongs to the AIR synthase family.

It is found in the cytoplasm. The enzyme catalyses 2-formamido-N(1)-(5-O-phospho-beta-D-ribosyl)acetamidine + ATP = 5-amino-1-(5-phospho-beta-D-ribosyl)imidazole + ADP + phosphate + H(+). The protein operates within purine metabolism; IMP biosynthesis via de novo pathway; 5-amino-1-(5-phospho-D-ribosyl)imidazole from N(2)-formyl-N(1)-(5-phospho-D-ribosyl)glycinamide: step 2/2. This chain is Phosphoribosylformylglycinamidine cyclo-ligase, found in Shewanella woodyi (strain ATCC 51908 / MS32).